A 1575-amino-acid polypeptide reads, in one-letter code: Ras GTPase-activating-like protein IQGAP2 (1575 aa).

Ser-16 is subject to Phosphoserine. A Calponin-homology (CH) domain is found at Leu-41–Leu-156. A Phosphothreonine modification is found at Thr-356. The 34-residue stretch at Val-594–Ser-627 folds into the WW domain. Ser-595, Ser-599, and Ser-685 each carry phosphoserine. IQ domains are found at residues Gln-690 to Asp-719, Asn-720 to Asp-749, and His-750 to Pro-779. The residue at position 716 (Thr-716) is a Phosphothreonine. Thr-782, Thr-881, Thr-1002, and Thr-1269 each carry phosphothreonine. Residues Tyr-933–Ala-1182 form the Ras-GAP domain. Residues Ser-1271, Ser-1279, Ser-1358, and Ser-1461 each carry the phosphoserine modification.

As to expression, isoform 2 expression is enhanced in testis.

In terms of biological role, binds to activated CDC42 and RAC1 but does not seem to stimulate their GTPase activity. Associates with calmodulin. The protein is Ras GTPase-activating-like protein IQGAP2 (IQGAP2) of Homo sapiens (Human).